The sequence spans 364 residues: RNA-binding protein 48 (364 aa).

In terms of domain architecture, RRM spans 51–129 (RYLLVQGVPA…GQLHVCYAPE (79 aa)). Over residues 157 to 174 (LHSQQAEVNTESSSSTDT) the composition is skewed to polar residues. 3 disordered regions span residues 157–191 (LHSQQAEVNTESSSSTDTRTAEAPIMQKNPEEARR), 239–291 (SLHN…ESRK), and 343–364 (ASVPEAKPVQAKHTTPKPRRRI). Positions 247–262 (VQKTSTQSESSSSSGV) are enriched in low complexity.

The protein belongs to the RBM48 family. As to quaternary structure, component of the minor spliceosome, which splices U12-type introns.

In terms of biological role, as a component of the minor spliceosome, involved in the splicing of U12-type introns in pre-mRNAs. The chain is RNA-binding protein 48 (rbm48) from Danio rerio (Zebrafish).